Here is a 910-residue protein sequence, read N- to C-terminus: Protein translocase subunit SecA (910 aa).

ATP contacts are provided by residues Q89, 107 to 111 (GEGKT), and D502. Residues C894, C896, C905, and H906 each coordinate Zn(2+).

Belongs to the SecA family. In terms of assembly, monomer and homodimer. Part of the essential Sec protein translocation apparatus which comprises SecA, SecYEG and auxiliary proteins SecDF-YajC and YidC. Zn(2+) is required as a cofactor.

The protein resides in the cell inner membrane. It is found in the cytoplasm. The catalysed reaction is ATP + H2O + cellular proteinSide 1 = ADP + phosphate + cellular proteinSide 2.. Functionally, part of the Sec protein translocase complex. Interacts with the SecYEG preprotein conducting channel. Has a central role in coupling the hydrolysis of ATP to the transfer of proteins into and across the cell membrane, serving both as a receptor for the preprotein-SecB complex and as an ATP-driven molecular motor driving the stepwise translocation of polypeptide chains across the membrane. This is Protein translocase subunit SecA from Chelativorans sp. (strain BNC1).